Here is a 167-residue protein sequence, read N- to C-terminus: Photosystem I assembly protein Ycf3 (167 aa).

3 TPR repeats span residues 35–68 (AFAY…EVDA), 72–105 (SYIL…NPSL), and 120–153 (GEQA…APTS).

Belongs to the Ycf3 family.

The protein resides in the plastid. Its subcellular location is the chloroplast thylakoid membrane. Functionally, essential for the assembly of the photosystem I (PSI) complex. May act as a chaperone-like factor to guide the assembly of the PSI subunits. The polypeptide is Photosystem I assembly protein Ycf3 (Chlorokybus atmophyticus (Soil alga)).